Here is a 311-residue protein sequence, read N- to C-terminus: HPr kinase/phosphorylase (311 aa).

Residues His-138 and Lys-159 contribute to the active site. Position 153-160 (153-160) interacts with ATP; sequence GDSGIGKS. Residue Ser-160 participates in Mg(2+) binding. Asp-177 (proton acceptor; for phosphorylation activity. Proton donor; for dephosphorylation activity) is an active-site residue. The tract at residues 201–210 is important for the catalytic mechanism of both phosphorylation and dephosphorylation; it reads LEIRGVGIID. Glu-202 contributes to the Mg(2+) binding site. Arg-243 is an active-site residue. The interval 264–269 is important for the catalytic mechanism of dephosphorylation; that stretch reads PVKTGR.

The protein belongs to the HPrK/P family. As to quaternary structure, homohexamer. It depends on Mg(2+) as a cofactor.

The enzyme catalyses [HPr protein]-L-serine + ATP = [HPr protein]-O-phospho-L-serine + ADP + H(+). The catalysed reaction is [HPr protein]-O-phospho-L-serine + phosphate + H(+) = [HPr protein]-L-serine + diphosphate. Its function is as follows. Catalyzes the ATP- as well as the pyrophosphate-dependent phosphorylation of a specific serine residue in HPr, a phosphocarrier protein of the phosphoenolpyruvate-dependent sugar phosphotransferase system (PTS). HprK/P also catalyzes the pyrophosphate-producing, inorganic phosphate-dependent dephosphorylation (phosphorolysis) of seryl-phosphorylated HPr (P-Ser-HPr). The two antagonistic activities of HprK/P are regulated by several intracellular metabolites, which change their concentration in response to the absence or presence of rapidly metabolisable carbon sources (glucose, fructose, etc.) in the growth medium. Therefore, by controlling the phosphorylation state of HPr, HPrK/P is a sensor enzyme that plays a major role in the regulation of carbon metabolism and sugar transport: it mediates carbon catabolite repression (CCR), and regulates PTS-catalyzed carbohydrate uptake and inducer exclusion. This is HPr kinase/phosphorylase from Streptococcus gordonii (strain Challis / ATCC 35105 / BCRC 15272 / CH1 / DL1 / V288).